Consider the following 126-residue polypeptide: Ribonuclease P protein component (126 aa).

It belongs to the RnpA family. Consists of a catalytic RNA component (M1 or rnpB) and a protein subunit.

It catalyses the reaction Endonucleolytic cleavage of RNA, removing 5'-extranucleotides from tRNA precursor.. RNaseP catalyzes the removal of the 5'-leader sequence from pre-tRNA to produce the mature 5'-terminus. It can also cleave other RNA substrates such as 4.5S RNA. The protein component plays an auxiliary but essential role in vivo by binding to the 5'-leader sequence and broadening the substrate specificity of the ribozyme. This Rhodococcus erythropolis (strain PR4 / NBRC 100887) protein is Ribonuclease P protein component.